The sequence spans 483 residues: Ribulose bisphosphate carboxylase large chain (483 aa).

The propeptide occupies 1 to 2 (MS). Asparagine 123 and threonine 173 together coordinate substrate. The active-site Proton acceptor is the lysine 175. Lysine 177 serves as a coordination point for substrate. Positions 201, 203, and 204 each coordinate Mg(2+). An N6-carboxylysine modification is found at lysine 201. Residue serine 208 is modified to Phosphoserine. The active-site Proton acceptor is the histidine 294. The substrate site is built by arginine 295 and histidine 327. Threonine 330 carries the phosphothreonine modification. Serine 379 contacts substrate.

It belongs to the RuBisCO large chain family. Type I subfamily. In terms of assembly, heterohexadecamer of 8 large chains and 8 small chains; disulfide-linked. The disulfide link is formed within the large subunit homodimers. The cofactor is Mg(2+). In terms of processing, the disulfide bond which can form in the large chain dimeric partners within the hexadecamer appears to be associated with oxidative stress and protein turnover.

Its subcellular location is the plastid. The protein localises to the chloroplast. The catalysed reaction is 2 (2R)-3-phosphoglycerate + 2 H(+) = D-ribulose 1,5-bisphosphate + CO2 + H2O. The enzyme catalyses D-ribulose 1,5-bisphosphate + O2 = 2-phosphoglycolate + (2R)-3-phosphoglycerate + 2 H(+). In terms of biological role, ruBisCO catalyzes two reactions: the carboxylation of D-ribulose 1,5-bisphosphate, the primary event in carbon dioxide fixation, as well as the oxidative fragmentation of the pentose substrate in the photorespiration process. Both reactions occur simultaneously and in competition at the same active site. In Aethionema cordifolium (Lebanon stonecress), this protein is Ribulose bisphosphate carboxylase large chain.